A 457-amino-acid chain; its full sequence is ATP synthase subunit beta (457 aa).

Position 147 to 154 (147 to 154 (GGAGVGKT)) interacts with ATP.

This sequence belongs to the ATPase alpha/beta chains family. F-type ATPases have 2 components, CF(1) - the catalytic core - and CF(0) - the membrane proton channel. CF(1) has five subunits: alpha(3), beta(3), gamma(1), delta(1), epsilon(1). CF(0) has three main subunits: a(1), b(2) and c(9-12). The alpha and beta chains form an alternating ring which encloses part of the gamma chain. CF(1) is attached to CF(0) by a central stalk formed by the gamma and epsilon chains, while a peripheral stalk is formed by the delta and b chains.

The protein resides in the cell inner membrane. It catalyses the reaction ATP + H2O + 4 H(+)(in) = ADP + phosphate + 5 H(+)(out). In terms of biological role, produces ATP from ADP in the presence of a proton gradient across the membrane. The catalytic sites are hosted primarily by the beta subunits. The chain is ATP synthase subunit beta from Haemophilus ducreyi (strain 35000HP / ATCC 700724).